We begin with the raw amino-acid sequence, 411 residues long: Translation initiation factor 2 subunit gamma (411 aa).

Residues 9–203 (QAEVNIGMVG…AIEDFIPTPK (195 aa)) form the tr-type G domain. Residues 18 to 25 (GHVDHGKT) form a G1 region. Asp21, Thr25, Gly46, and Thr48 together coordinate Mg(2+). 21-26 (DHGKTT) is a binding site for GTP. The tract at residues 46–50 (GITIK) is G2. 4 residues coordinate Zn(2+): Cys61, Cys64, Cys73, and Cys76. Positions 90-93 (DAPG) are G3. Residues 146–149 (NKIE) and 181–183 (SAL) each bind GTP. The segment at 146 to 149 (NKIE) is G4. A G5 region spans residues 181–183 (SAL).

The protein belongs to the TRAFAC class translation factor GTPase superfamily. Classic translation factor GTPase family. EIF2G subfamily. As to quaternary structure, heterotrimer composed of an alpha, a beta and a gamma chain. Mg(2+) serves as cofactor.

The enzyme catalyses GTP + H2O = GDP + phosphate + H(+). EIF-2 functions in the early steps of protein synthesis by forming a ternary complex with GTP and initiator tRNA. This Pyrococcus horikoshii (strain ATCC 700860 / DSM 12428 / JCM 9974 / NBRC 100139 / OT-3) protein is Translation initiation factor 2 subunit gamma.